Consider the following 158-residue polypeptide: Low molecular weight phosphotyrosine protein phosphatase (158 aa).

Alanine 2 is modified (N-acetylalanine). The active-site Nucleophile is cysteine 13. Residue arginine 19 is part of the active site. Aspartate 130 acts as the Proton donor in catalysis. Residues tyrosine 132 and tyrosine 133 each carry the phosphotyrosine modification.

It belongs to the low molecular weight phosphotyrosine protein phosphatase family.

It localises to the cytoplasm. It catalyses the reaction O-phospho-L-tyrosyl-[protein] + H2O = L-tyrosyl-[protein] + phosphate. It carries out the reaction a phosphate monoester + H2O = an alcohol + phosphate. Functionally, acts on tyrosine phosphorylated proteins, low-MW aryl phosphates and natural and synthetic acyl phosphates. The chain is Low molecular weight phosphotyrosine protein phosphatase (ACP1) from Gallus gallus (Chicken).